The following is a 534-amino-acid chain: Serine/threonine-protein kinase NLK (534 aa).

2 sufficient for interaction with DAPK3 regions span residues 8–132 (LVSC…KAHH) and 131–423 (HHHQ…SKRI). Required for interaction with TAB2 stretches follow at residues 8-311 (LVSC…VVTQ) and 441-534 (YHTC…LVWE). Disordered stretches follow at residues 29-79 (AAAA…SSAA) and 97-147 (QQPY…DIEP). Positions 33-61 (GHHHHHHHHLPHLPPPHLHHHHHPQHHLH) are enriched in basic residues. A compositionally biased stretch (low complexity) spans 110–126 (PGPAAAAPAQVQAAAAA). The span at 129–138 (KAHHHQHSHH) shows a compositional bias: basic residues. In terms of domain architecture, Protein kinase spans 145-434 (IEPDRPIGYG…AKDALAHPYL (290 aa)). ATP is bound by residues 151–159 (IGYGAFGVV) and lysine 174. Aspartate 271 functions as the Proton acceptor in the catalytic mechanism. At threonine 305 the chain carries Phosphothreonine; by autocatalysis. The short motif at 305–307 (TQE) is the TQE element. The required for homodimerization and kinase activation and localization to the nucleus stretch occupies residues 435-534 (DEGRLRYHTC…EMPPSPLVWE (100 aa)). Serine 529 bears the Phosphoserine mark.

It belongs to the protein kinase superfamily. CMGC Ser/Thr protein kinase family. MAP kinase subfamily. As to quaternary structure, homodimer. Homodimerization is required for intermolecular autophosphorylation, kinase activation and nuclear localization. May interact with components of cullin-RING-based SCF (SKP1-CUL1-F-box protein) E3 ubiquitin-protein ligase complexes. Interacts with LEF1, MEF2A, MYBL1 and MYBL2. Interacts with the upstream activating kinases HIPK2 and MAP3K7/TAK1. Interaction with MAP3K7/TAK1 seems to be indirect, and may be mediated by other proteins such as STAT3, TAB1 and TAB2. Interacts with and phosphorylates a number of transcription factors including FOXO1, FOXO3, FOXO4, MYB, NOTCH1 and TCF7L2/TCF4. Interacts with DAPK3/ZIPK, and this interaction may disrupt interaction with transcription factors such as TCF7L2/TCF4. Forms a transcriptional repressor complex with CHD7, PPARG and SETDB1. Interacts with RNF138/NARF. Interacts with ATF5; the interaction stabilizes ATF5 at the protein level in a kinase-independent manner. Mg(2+) is required as a cofactor. In terms of processing, phosphorylated on Thr-305. Intermolecular autophosphorylation on Thr-305 activates the enzyme.

It is found in the nucleus. The protein localises to the cytoplasm. The enzyme catalyses L-seryl-[protein] + ATP = O-phospho-L-seryl-[protein] + ADP + H(+). The catalysed reaction is L-threonyl-[protein] + ATP = O-phospho-L-threonyl-[protein] + ADP + H(+). Activated by the non-canonical Wnt signaling pathway, in which WNT5A leads to activation of MAP3K7/TAK1 and HIPK2, which subsequently phosphorylates and activates this protein. Activated by dimerization and subsequent intermolecular autophosphorylation on Thr-305. Other cytokines such as IL6 may also activate this regulatory circuit. Its function is as follows. Serine/threonine-protein kinase that regulates a number of transcription factors with key roles in cell fate determination. Positive effector of the non-canonical Wnt signaling pathway, acting downstream of WNT5A, MAP3K7/TAK1 and HIPK2. Negative regulator of the canonical Wnt/beta-catenin signaling pathway. Binds to and phosphorylates TCF7L2/TCF4 and LEF1, promoting the dissociation of the TCF7L2/LEF1/beta-catenin complex from DNA, as well as the ubiquitination and subsequent proteolysis of LEF1. Together these effects inhibit the transcriptional activation of canonical Wnt/beta-catenin target genes. Negative regulator of the Notch signaling pathway. Binds to and phosphorylates NOTCH1, thereby preventing the formation of a transcriptionally active ternary complex of NOTCH1, RBPJ/RBPSUH and MAML1. Negative regulator of the MYB family of transcription factors. Phosphorylation of MYB leads to its subsequent proteolysis while phosphorylation of MYBL1 and MYBL2 inhibits their interaction with the coactivator CREBBP. Other transcription factors may also be inhibited by direct phosphorylation of CREBBP itself. Acts downstream of IL6 and MAP3K7/TAK1 to phosphorylate STAT3, which is in turn required for activation of NLK by MAP3K7/TAK1. Upon IL1B stimulus, cooperates with ATF5 to activate the transactivation activity of C/EBP subfamily members. Phosphorylates ATF5 but also stabilizes ATF5 protein levels in a kinase-independent manner. Acts as an inhibitor of the mTORC1 complex in response to osmotic stress by mediating phosphorylation of RPTOR, thereby preventing recruitment of the mTORC1 complex to lysosomes. This chain is Serine/threonine-protein kinase NLK (NLK), found in Bos taurus (Bovine).